A 532-amino-acid polypeptide reads, in one-letter code: Cocaine esterase (532 aa).

Gln-1 carries the pyrrolidone carboxylic acid modification. Cys-69 and Cys-96 form a disulfide bridge. Ser-201 serves as the catalytic Acyl-ester intermediate. Residue Asn-249 is glycosylated (N-linked (GlcNAc...) asparagine). The cysteines at positions 253 and 264 are disulfide-linked. Active-site charge relay system residues include Glu-318 and His-430. A Prevents secretion from ER motif is present at residues 529–532; it reads HTEL.

The protein belongs to the type-B carboxylesterase/lipase family. In terms of assembly, monomer.

The protein localises to the endoplasmic reticulum lumen. It carries out the reaction a carboxylic ester + H2O = an alcohol + a carboxylate + H(+). The enzyme catalyses cocaine + H2O = ecgonine methyl ester + benzoate + H(+). It catalyses the reaction 2-(5Z,8Z,11Z,14Z-eicosatetraenoyl)-glycerol + H2O = glycerol + (5Z,8Z,11Z,14Z)-eicosatetraenoate + H(+). The catalysed reaction is prostaglandin E2 1-glyceryl ester + H2O = prostaglandin E2 + glycerol + H(+). It carries out the reaction prostaglandin F2alpha 1-glyceryl ester + H2O = prostaglandin F2alpha + glycerol + H(+). Involved in the detoxification of xenobiotics and in the activation of ester and amide prodrugs. Converts monoacylglycerides to free fatty acids and glycerol. Hydrolyzes of 2-arachidonoylglycerol and prostaglandins. The chain is Cocaine esterase (CES2) from Oryctolagus cuniculus (Rabbit).